Reading from the N-terminus, the 563-residue chain is Germacrene-A synthase (563 aa).

Mg(2+) contacts are provided by Asp-316, Asp-320, Asp-461, and Glu-469. The short motif at 316–320 is the DDXXD motif element; sequence DDIYD.

Belongs to the terpene synthase family. Tpsa subfamily. Mg(2+) serves as cofactor. As to expression, expressed in young leaves. Detected in trichomes and cones.

It carries out the reaction (2E,6E)-farnesyl diphosphate = (+)-(R)-germacrene A + diphosphate. Its pathway is secondary metabolite biosynthesis; terpenoid biosynthesis. Functionally, sesquiterpene synthase that catalyzes the formation of germacrene A. Can use farnesyl diphosphate as substrate, but not geranyl diphosphate or geranylgeranyl diphosphate. Beta-elemene, the initially measured product in the assay, is derived nonenzymatically from germacrene A. The sequence is that of Germacrene-A synthase from Humulus lupulus (European hop).